The chain runs to 243 residues: GrpE protein homolog, mitochondrial (243 aa).

The interval 42–75 (TEASKKEGKEDKAEAQGSQEPETAAETNKEAEGA) is disordered. Basic and acidic residues predominate over residues 44–55 (ASKKEGKEDKAE).

This sequence belongs to the GrpE family. Component of the PAM complex, at least composed of mtHsp70, MGE1, TIM44, PAM16, PAM17 and PAM18.

It localises to the mitochondrion matrix. Its function is as follows. Essential component of the PAM complex, a complex required for the translocation of transit peptide-containing proteins from the inner membrane into the mitochondrial matrix in an ATP-dependent manner. Seems to control the nucleotide-dependent binding of SSC1 to substrate proteins. The polypeptide is GrpE protein homolog, mitochondrial (mge1) (Debaryomyces hansenii (strain ATCC 36239 / CBS 767 / BCRC 21394 / JCM 1990 / NBRC 0083 / IGC 2968) (Yeast)).